The following is a 177-amino-acid chain: Large ribosomal subunit protein uL6 (177 aa).

The segment covering 156 to 171 has biased composition (basic and acidic residues); sequence PYKGKGVRYDTETIRR. Residues 156–177 form a disordered region; the sequence is PYKGKGVRYDTETIRRKEGKKK.

This sequence belongs to the universal ribosomal protein uL6 family. As to quaternary structure, part of the 50S ribosomal subunit.

Functionally, this protein binds to the 23S rRNA, and is important in its secondary structure. It is located near the subunit interface in the base of the L7/L12 stalk, and near the tRNA binding site of the peptidyltransferase center. This Gluconacetobacter diazotrophicus (strain ATCC 49037 / DSM 5601 / CCUG 37298 / CIP 103539 / LMG 7603 / PAl5) protein is Large ribosomal subunit protein uL6.